Consider the following 384-residue polypeptide: Putative aminohydrolase MTH_994 (384 aa).

Zn(2+)-binding residues include H60, H62, H207, and D291.

The protein belongs to the metallo-dependent hydrolases superfamily. ATZ/TRZ family.

In Methanothermobacter thermautotrophicus (strain ATCC 29096 / DSM 1053 / JCM 10044 / NBRC 100330 / Delta H) (Methanobacterium thermoautotrophicum), this protein is Putative aminohydrolase MTH_994.